The chain runs to 201 residues: Peptidyl-tRNA hydrolase (201 aa).

Tyr15 is a binding site for tRNA. His20 (proton acceptor) is an active-site residue. The tRNA site is built by Tyr66, Asn68, and Asn114.

The protein belongs to the PTH family. Monomer.

Its subcellular location is the cytoplasm. The enzyme catalyses an N-acyl-L-alpha-aminoacyl-tRNA + H2O = an N-acyl-L-amino acid + a tRNA + H(+). Functionally, hydrolyzes ribosome-free peptidyl-tRNAs (with 1 or more amino acids incorporated), which drop off the ribosome during protein synthesis, or as a result of ribosome stalling. Its function is as follows. Catalyzes the release of premature peptidyl moieties from peptidyl-tRNA molecules trapped in stalled 50S ribosomal subunits, and thus maintains levels of free tRNAs and 50S ribosomes. The sequence is that of Peptidyl-tRNA hydrolase from Burkholderia pseudomallei (strain K96243).